The chain runs to 455 residues: Bifunctional protein GlmU (455 aa).

Residues 1–226 (MSLDIVILAA…PMEVQGANDR (226 aa)) form a pyrophosphorylase region. UDP-N-acetyl-alpha-D-glucosamine contacts are provided by residues 8–11 (LAAG), K22, Q73, 78–79 (GT), 99–101 (YGD), G136, E151, N166, and N224. D101 serves as a coordination point for Mg(2+). N224 contacts Mg(2+). The interval 227 to 247 (RQLSELERHYQLREGRRLMAQ) is linker. The interval 248–455 (GVTLRDPARF…WKRPEKIKKS (208 aa)) is N-acetyltransferase. The UDP-N-acetyl-alpha-D-glucosamine site is built by R330 and K348. Catalysis depends on H360, which acts as the Proton acceptor. UDP-N-acetyl-alpha-D-glucosamine is bound by residues Y363 and N374. Acetyl-CoA contacts are provided by residues A377, 383-384 (NY), S402, A420, and R437.

This sequence in the N-terminal section; belongs to the N-acetylglucosamine-1-phosphate uridyltransferase family. In the C-terminal section; belongs to the transferase hexapeptide repeat family. As to quaternary structure, homotrimer. The cofactor is Mg(2+).

It localises to the cytoplasm. The catalysed reaction is alpha-D-glucosamine 1-phosphate + acetyl-CoA = N-acetyl-alpha-D-glucosamine 1-phosphate + CoA + H(+). It carries out the reaction N-acetyl-alpha-D-glucosamine 1-phosphate + UTP + H(+) = UDP-N-acetyl-alpha-D-glucosamine + diphosphate. It participates in nucleotide-sugar biosynthesis; UDP-N-acetyl-alpha-D-glucosamine biosynthesis; N-acetyl-alpha-D-glucosamine 1-phosphate from alpha-D-glucosamine 6-phosphate (route II): step 2/2. It functions in the pathway nucleotide-sugar biosynthesis; UDP-N-acetyl-alpha-D-glucosamine biosynthesis; UDP-N-acetyl-alpha-D-glucosamine from N-acetyl-alpha-D-glucosamine 1-phosphate: step 1/1. Its pathway is bacterial outer membrane biogenesis; LPS lipid A biosynthesis. Its function is as follows. Catalyzes the last two sequential reactions in the de novo biosynthetic pathway for UDP-N-acetylglucosamine (UDP-GlcNAc). The C-terminal domain catalyzes the transfer of acetyl group from acetyl coenzyme A to glucosamine-1-phosphate (GlcN-1-P) to produce N-acetylglucosamine-1-phosphate (GlcNAc-1-P), which is converted into UDP-GlcNAc by the transfer of uridine 5-monophosphate (from uridine 5-triphosphate), a reaction catalyzed by the N-terminal domain. The chain is Bifunctional protein GlmU from Pseudomonas entomophila (strain L48).